Here is a 391-residue protein sequence, read N- to C-terminus: Cilia- and flagella-associated protein 263 (391 aa).

A disordered region spans residues 1–21; the sequence is MTDDDSETSASETQAQEESDL. Coiled-coil stretches lie at residues 95 to 243 and 294 to 369; these read LSVD…NQEL and LRKE…LKGY.

It belongs to the CFAP263 family. In terms of assembly, forms a complex with CFAP184; the interaction is required for functional activity in cilia. Interacts with HAP1 and PCM1.

The protein localises to the cytoplasm. Its subcellular location is the cytoskeleton. The protein resides in the microtubule organizing center. It localises to the centrosome. It is found in the centriolar satellite. The protein localises to the cell projection. Its subcellular location is the cilium. Component of centriolar satellites contributing to primary cilium formation. In complex with CFAP263, acts as a regulator of ciliary beating that connects radial spoke 3 (RS3) to the inner dynein arm (IDA) and the nexin-dynein regulatory complex (N-DRC). The complex is positioned parallel to N-DRC and forms a connection between the arch at the base of RS3, the IDA tail and N-DRC. This is Cilia- and flagella-associated protein 263 (CFAP263) from Bos taurus (Bovine).